The chain runs to 380 residues: DNA replication and repair protein RecF (380 aa).

30 to 37 is a binding site for ATP; that stretch reads GQNGQGKT.

Belongs to the RecF family.

The protein resides in the cytoplasm. Functionally, the RecF protein is involved in DNA metabolism; it is required for DNA replication and normal SOS inducibility. RecF binds preferentially to single-stranded, linear DNA. It also seems to bind ATP. This chain is DNA replication and repair protein RecF, found in Myxococcus xanthus (strain DK1622).